The primary structure comprises 302 residues: 2-phosphoglycerate kinase (302 aa).

Residues 2–89 (IKVIERDGKV…FWRRFRKLKI (88 aa)) enclose the ATP-cone domain.

It belongs to the 2-phosphoglycerate kinase family. A divalent metal cation serves as cofactor.

It catalyses the reaction (2R)-2-phosphoglycerate + ATP = (2R)-2,3-bisphosphoglycerate + ADP + H(+). It functions in the pathway thermoadapter biosynthesis; cyclic 2,3-diphosphoglycerate biosynthesis; cyclic 2,3-diphosphoglycerate from 2-phospho-D-glycerate: step 1/2. In terms of biological role, catalyzes the phosphorylation of 2-phosphoglycerate to 2,3-diphosphoglycerate. Involved in the biosynthesis of cyclic 2,3-bisphosphoglycerate, a thermoprotectant. This chain is 2-phosphoglycerate kinase, found in Pyrococcus furiosus (strain ATCC 43587 / DSM 3638 / JCM 8422 / Vc1).